A 413-amino-acid chain; its full sequence is Multifunctional CCA protein (413 aa).

ATP is bound by residues Gly8 and Arg11. CTP is bound by residues Gly8 and Arg11. Mg(2+)-binding residues include Asp21 and Asp23. Residues Arg91, Arg137, and Arg140 each coordinate ATP. Residues Arg91, Arg137, and Arg140 each coordinate CTP. Positions 228 to 329 (TGIHTLMTLS…VKLFDSIDAW (102 aa)) constitute an HD domain.

Belongs to the tRNA nucleotidyltransferase/poly(A) polymerase family. Bacterial CCA-adding enzyme type 1 subfamily. Monomer. Can also form homodimers and oligomers. Mg(2+) is required as a cofactor. The cofactor is Ni(2+).

It catalyses the reaction a tRNA precursor + 2 CTP + ATP = a tRNA with a 3' CCA end + 3 diphosphate. It carries out the reaction a tRNA with a 3' CCA end + 2 CTP + ATP = a tRNA with a 3' CCACCA end + 3 diphosphate. Catalyzes the addition and repair of the essential 3'-terminal CCA sequence in tRNAs without using a nucleic acid template. Adds these three nucleotides in the order of C, C, and A to the tRNA nucleotide-73, using CTP and ATP as substrates and producing inorganic pyrophosphate. tRNA 3'-terminal CCA addition is required both for tRNA processing and repair. Also involved in tRNA surveillance by mediating tandem CCA addition to generate a CCACCA at the 3' terminus of unstable tRNAs. While stable tRNAs receive only 3'-terminal CCA, unstable tRNAs are marked with CCACCA and rapidly degraded. The chain is Multifunctional CCA protein from Citrobacter koseri (strain ATCC BAA-895 / CDC 4225-83 / SGSC4696).